The sequence spans 513 residues: Putative ribose/galactose/methyl galactoside import ATP-binding protein (513 aa).

ABC transporter domains are found at residues 24-260 (LSAE…VGRE) and 270-510 (VPIG…VMEL). 56–63 (GENGAGKS) contacts ATP.

This sequence belongs to the ABC transporter superfamily. Carbohydrate importer 2 (CUT2) (TC 3.A.1.2) family.

It localises to the cell inner membrane. It catalyses the reaction D-ribose(out) + ATP + H2O = D-ribose(in) + ADP + phosphate + H(+). It carries out the reaction D-galactose(out) + ATP + H2O = D-galactose(in) + ADP + phosphate + H(+). Part of an ABC transporter complex involved in carbohydrate import. Could be involved in ribose, galactose and/or methyl galactoside import. Responsible for energy coupling to the transport system. The chain is Putative ribose/galactose/methyl galactoside import ATP-binding protein from Rhizobium johnstonii (strain DSM 114642 / LMG 32736 / 3841) (Rhizobium leguminosarum bv. viciae).